The following is a 450-amino-acid chain: Involucrin (450 aa).

The span at 1–19 (MSQQHTLPVTLPPTLSQEL) shows a compositional bias: polar residues. 3 disordered regions span residues 1–43 (MSQQ…LPAP), 77–370 (QLQQ…EQLK), and 422–450 (PGQVQDIQPPQPPKGEVLLPAEQQQEPEV). The segment covering 86–108 (QEVHLAKHQELQELQEQELHLGK) has biased composition (basic and acidic residues). The segment covering 120 to 135 (GKQQQQQESQEQELYL) has biased composition (low complexity). 2 stretches are compositionally biased toward basic and acidic residues: residues 187–200 (LGKRLEPQEQELHL) and 264–281 (QELHLGKRLEPQEQELHL). The segment covering 295-344 (GEAAAAGVTGAGPAASKAARRATGAGTAPGKAAAAAGATGAGTAATAPAT) has biased composition (low complexity). Residues 345-370 (AEERQKAESLEQQLEQEKAQREEQLK) are compositionally biased toward basic and acidic residues.

The protein belongs to the involucrin family. As to quaternary structure, directly or indirectly cross-linked to cornifelin (CNFN). In terms of processing, substrate of transglutaminase. Specific glutamines or lysines are cross-linked to keratins, desmoplakin and to inter involucrin molecules. As to expression, keratinocytes of epidermis and other stratified squamous epithelia.

The protein localises to the cytoplasm. Functionally, part of the insoluble cornified cell envelope (CE) of stratified squamous epithelia. This chain is Involucrin (IVL), found in Lemur catta (Ring-tailed lemur).